The following is an 821-amino-acid chain: Tip elongation aberrant protein Tea4 (821 aa).

Polar residues-rich tracts occupy residues 1–11 (MLHMNSASSAD) and 21–31 (DPTQQNDSTII). The interval 1–36 (MLHMNSASSADSMEIMESHFDPTQQNDSTIIESRYS) is disordered. Residue Tyr35 is modified to Phosphotyrosine. Ser36 carries the post-translational modification Phosphoserine. Tyr40 is subject to Phosphotyrosine. Residues 51–79 (ISGENSEPQTVASQEISDSQEEDTTLTSS) form a disordered region. The segment covering 53-67 (GENSEPQTVASQEIS) has biased composition (polar residues). Positions 130–191 (IDCNFVHAIR…PAEYIETPSE (62 aa)) constitute an SH3 domain. 5 disordered regions span residues 267 to 292 (LEIEFSDSSDSSLSAEYRSESEDHVT), 333 to 352 (SSTTADSKNSHSPYSKFSSA), 473 to 500 (DSFDTSNVTQDAPNDVEKEPISGQMPNN), 529 to 570 (SPRL…SSLL), and 664 to 697 (DASSAIPSSSISHDEDLLPRKNTEESTSSSSFSS). A compositionally biased stretch (low complexity) spans 268–282 (EIEFSDSSDSSLSAE). The span at 283 to 292 (YRSESEDHVT) shows a compositional bias: basic and acidic residues. Composition is skewed to polar residues over residues 333-350 (SSTTADSKNSHSPYSKFS) and 473-484 (DSFDTSNVTQDA). The segment at 527–821 (LLSPRLYSSS…EMASLLNTNR (295 aa)) is interaction with tea1. Positions 529 to 541 (SPRLYSSSTPSSP) are enriched in low complexity. A compositionally biased stretch (basic and acidic residues) spans 554-563 (ENRKQADKVE). Residues 599 to 821 (KAFSQSSIDL…EMASLLNTNR (223 aa)) are interaction with win1. The span at 665-674 (ASSAIPSSSI) shows a compositional bias: low complexity. The segment covering 675–687 (SHDEDLLPRKNTE) has biased composition (basic and acidic residues).

As to quaternary structure, an essential component of the tea1 cell-end complex. Interacts with win1, tea1 and for3. Interacts with tip1 in the presence of tea1.

It is found in the cytoplasm. The protein localises to the cytoskeleton. Cell polarity factor essential for the bipolar localization and function of structures containing the cell-end marker tea1 during the normal cell cycle. Regulates cell polarity in complex with tea1 and together with the stress signaling MAPK cascade, contributes to cell polarity maintenance under stress conditions. Required for the localization of for3 at the cell tip specifically during initiation of bipolar growth. During the new end take off (NETO), formation of a protein complex that includes tea1, tea4 and for3 is necessary and sufficient for the establishment of cell polarity and localized actin assembly at new cell ends. This is Tip elongation aberrant protein Tea4 from Schizosaccharomyces pombe (strain 972 / ATCC 24843) (Fission yeast).